Consider the following 360-residue polypeptide: Serine/threonine transporter SstT (360 aa).

9 consecutive transmembrane segments (helical) span residues 17–37, 40–60, 78–98, 138–158, 179–199, 212–232, 295–315, 316–336, and 339–359; these read IGIG…ITVI, FGSL…LTLV, VICL…GASY, ALAT…GLAF, VVGW…FDTI, LLLL…NPLI, MAGA…TLGI, SVDF…AAGA, and VAGG…VPYV.

It belongs to the dicarboxylate/amino acid:cation symporter (DAACS) (TC 2.A.23) family.

Its subcellular location is the cell membrane. The catalysed reaction is L-serine(in) + Na(+)(in) = L-serine(out) + Na(+)(out). It catalyses the reaction L-threonine(in) + Na(+)(in) = L-threonine(out) + Na(+)(out). Involved in the import of serine and threonine into the cell, with the concomitant import of sodium (symport system). The protein is Serine/threonine transporter SstT of Streptococcus suis (strain 05ZYH33).